The primary structure comprises 189 residues: Elongation factor P (189 aa).

Lysine 34 bears the N6-(3,6-diaminohexanoyl)-5-hydroxylysine mark.

This sequence belongs to the elongation factor P family. May be beta-lysylated on the epsilon-amino group of Lys-34 by the combined action of EpmA and EpmB, and then hydroxylated on the C5 position of the same residue by EpmC (if this protein is present). Lysylation is critical for the stimulatory effect of EF-P on peptide-bond formation. The lysylation moiety may extend toward the peptidyltransferase center and stabilize the terminal 3-CCA end of the tRNA. Hydroxylation of the C5 position on Lys-34 may allow additional potential stabilizing hydrogen-bond interactions with the P-tRNA.

It is found in the cytoplasm. It functions in the pathway protein biosynthesis; polypeptide chain elongation. Functionally, involved in peptide bond synthesis. Alleviates ribosome stalling that occurs when 3 or more consecutive Pro residues or the sequence PPG is present in a protein, possibly by augmenting the peptidyl transferase activity of the ribosome. Modification of Lys-34 is required for alleviation. This is Elongation factor P from Legionella pneumophila (strain Paris).